Consider the following 399-residue polypeptide: S-adenosylmethionine synthase (399 aa).

His17 serves as a coordination point for ATP. Asp19 provides a ligand contact to Mg(2+). Residue Glu45 participates in K(+) binding. Residues Glu58 and Gln101 each contribute to the L-methionine site. Residues 101 to 111 (QSPDIAQGVDE) form a flexible loop region. Residues 177 to 179 (DAK), 244 to 245 (RF), Asp253, 259 to 260 (RK), Ala276, and Lys280 each bind ATP. Asp253 lines the L-methionine pocket. Lys284 is an L-methionine binding site.

Belongs to the AdoMet synthase family. Homotetramer; dimer of dimers. The cofactor is Mg(2+). K(+) is required as a cofactor.

It localises to the cytoplasm. The catalysed reaction is L-methionine + ATP + H2O = S-adenosyl-L-methionine + phosphate + diphosphate. It functions in the pathway amino-acid biosynthesis; S-adenosyl-L-methionine biosynthesis; S-adenosyl-L-methionine from L-methionine: step 1/1. In terms of biological role, catalyzes the formation of S-adenosylmethionine (AdoMet) from methionine and ATP. The overall synthetic reaction is composed of two sequential steps, AdoMet formation and the subsequent tripolyphosphate hydrolysis which occurs prior to release of AdoMet from the enzyme. The polypeptide is S-adenosylmethionine synthase (Listeria monocytogenes serotype 4b (strain CLIP80459)).